Reading from the N-terminus, the 845-residue chain is Protein translocase subunit SecA 1 (845 aa).

ATP contacts are provided by residues Gln85, Gly103–Thr107, and Asp492.

This sequence belongs to the SecA family. As to quaternary structure, monomer and homodimer. Part of the essential Sec protein translocation apparatus which comprises SecA, SecYEG and auxiliary proteins SecDF. Other proteins may also be involved.

It localises to the cell membrane. The protein resides in the cytoplasm. It catalyses the reaction ATP + H2O + cellular proteinSide 1 = ADP + phosphate + cellular proteinSide 2.. Part of the Sec protein translocase complex. Interacts with the SecYEG preprotein conducting channel. Has a central role in coupling the hydrolysis of ATP to the transfer of proteins into and across the cell membrane, serving as an ATP-driven molecular motor driving the stepwise translocation of polypeptide chains across the membrane. This chain is Protein translocase subunit SecA 1, found in Corynebacterium glutamicum (strain ATCC 13032 / DSM 20300 / JCM 1318 / BCRC 11384 / CCUG 27702 / LMG 3730 / NBRC 12168 / NCIMB 10025 / NRRL B-2784 / 534).